We begin with the raw amino-acid sequence, 143 residues long: MRILVQRVTSARVIVGGDVVGAIEPETQGLLALVGVTHDDDHMKARRLAEKLWSLRILDDEKSASDIGAPILVVSQFTLYGNTTKGRRPTWNAAAPGPVAEPLVSDFAAALESLGATVQTGVFGADMQVELVNDGPVTVLLEL.

The Gly-cisPro motif, important for rejection of L-amino acids motif lies at 135–136; sequence GP.

Belongs to the DTD family. As to quaternary structure, homodimer.

The protein resides in the cytoplasm. It carries out the reaction glycyl-tRNA(Ala) + H2O = tRNA(Ala) + glycine + H(+). The enzyme catalyses a D-aminoacyl-tRNA + H2O = a tRNA + a D-alpha-amino acid + H(+). In terms of biological role, an aminoacyl-tRNA editing enzyme that deacylates mischarged D-aminoacyl-tRNAs. Also deacylates mischarged glycyl-tRNA(Ala), protecting cells against glycine mischarging by AlaRS. Acts via tRNA-based rather than protein-based catalysis; rejects L-amino acids rather than detecting D-amino acids in the active site. By recycling D-aminoacyl-tRNA to D-amino acids and free tRNA molecules, this enzyme counteracts the toxicity associated with the formation of D-aminoacyl-tRNA entities in vivo and helps enforce protein L-homochirality. This Mycolicibacterium gilvum (strain PYR-GCK) (Mycobacterium gilvum (strain PYR-GCK)) protein is D-aminoacyl-tRNA deacylase.